Here is a 219-residue protein sequence, read N- to C-terminus: Charged multivesicular body protein 5 (219 aa).

The segment covering Met1 to Pro10 has biased composition (basic residues). Residues Met1–Ile21 form a disordered region. Residue Lys7 is the site of (Microbial infection) N6-stearoyl lysine attachment. A coiled-coil region spans residues Ser26–Asp179. Ser86 is subject to Phosphoserine. The interaction with VTA1 stretch occupies residues Lys121–Leu158. Residues Ser188 to Ser219 form a disordered region.

The protein belongs to the SNF7 family. As to quaternary structure, probable peripherally associated component of the endosomal sorting required for transport complex III (ESCRT-III). ESCRT-III components are thought to multimerize to form a flat lattice on the perimeter membrane of the endosome. Several assembly forms of ESCRT-III may exist that interact and act sequentially. Interacts with VTA1; the interaction involves soluble CHMP5. Interacts with CHMP2A. Interacts with NOD2. Interacts with BROX. Post-translationally, (Microbial infection) Stearoylated By S.flexneri N-epsilon-fatty acyltransferase IcsB, promoting S.flexneri evasion of autophagy. ISGylated. Isgylation inhibits its interaction with VTA1.

The protein resides in the cytoplasm. It is found in the cytosol. The protein localises to the endosome membrane. It localises to the midbody. Functionally, probable peripherally associated component of the endosomal sorting required for transport complex III (ESCRT-III) which is involved in multivesicular bodies (MVBs) formation and sorting of endosomal cargo proteins into MVBs. MVBs contain intraluminal vesicles (ILVs) that are generated by invagination and scission from the limiting membrane of the endosome and mostly are delivered to lysosomes enabling degradation of membrane proteins, such as stimulated growth factor receptors, lysosomal enzymes and lipids. The MVB pathway appears to require the sequential function of ESCRT-O, -I,-II and -III complexes. ESCRT-III proteins mostly dissociate from the invaginating membrane before the ILV is released. The ESCRT machinery also functions in topologically equivalent membrane fission events, such as the terminal stages of cytokinesis and the budding of enveloped viruses (HIV-1 and other lentiviruses). ESCRT-III proteins are believed to mediate the necessary vesicle extrusion and/or membrane fission activities, possibly in conjunction with the AAA ATPase VPS4. Involved in HIV-1 p6- and p9-dependent virus release. The chain is Charged multivesicular body protein 5 (CHMP5) from Homo sapiens (Human).